The chain runs to 339 residues: Probable E3 ubiquitin-protein ligase BAH1-like 1 (339 aa).

Positions 1–163 (MKFGAIYEEY…GSVSGRDFKS (163 aa)) constitute an SPX domain. The segment at 235–284 (CPICLDTLFNPYALSCGHLFCKGCACGAASVYIFQGVKSAPPEAKCPVCR) adopts an RING-type zinc-finger fold.

This sequence belongs to the RING-type zinc finger family.

The catalysed reaction is S-ubiquitinyl-[E2 ubiquitin-conjugating enzyme]-L-cysteine + [acceptor protein]-L-lysine = [E2 ubiquitin-conjugating enzyme]-L-cysteine + N(6)-ubiquitinyl-[acceptor protein]-L-lysine.. It participates in protein modification; protein ubiquitination. The polypeptide is Probable E3 ubiquitin-protein ligase BAH1-like 1 (Oryza sativa subsp. indica (Rice)).